Reading from the N-terminus, the 334-residue chain is Formamidase (334 aa).

The 247-residue stretch at 14–260 (FLVAAIQFPV…WEIVTGEIYP (247 aa)) folds into the CN hydrolase domain. Residue E60 is the Proton acceptor of the active site. The active-site Proton donor is the K133. C166 functions as the Nucleophile in the catalytic mechanism.

The protein belongs to the carbon-nitrogen hydrolase superfamily. Aliphatic amidase family. In terms of assembly, homotetramer.

It carries out the reaction formamide + H2O = formate + NH4(+). With respect to regulation, inhibited by iodoacetate. Appears to be regulated by the fur protein, but this effect is not mediated at the transcriptional level. Its function is as follows. Is an aliphatic amidase with a restricted substrate specificity, as it only hydrolyzes formamide. Probably involved in the nitrogen metabolism of H.pylori. This chain is Formamidase (amiF), found in Helicobacter pylori (strain ATCC 700392 / 26695) (Campylobacter pylori).